Here is a 217-residue protein sequence, read N- to C-terminus: 3,4-dihydroxy-2-butanone 4-phosphate synthase (217 aa).

Residues 37-38 (RE), Asp42, 150-154 (RQGHT), and Glu174 contribute to the D-ribulose 5-phosphate site. Residue Glu38 coordinates Mg(2+). Residue His153 coordinates Mg(2+).

The protein belongs to the DHBP synthase family. In terms of assembly, homodimer. It depends on Mg(2+) as a cofactor. Mn(2+) serves as cofactor.

The catalysed reaction is D-ribulose 5-phosphate = (2S)-2-hydroxy-3-oxobutyl phosphate + formate + H(+). The protein operates within cofactor biosynthesis; riboflavin biosynthesis; 2-hydroxy-3-oxobutyl phosphate from D-ribulose 5-phosphate: step 1/1. In terms of biological role, catalyzes the conversion of D-ribulose 5-phosphate to formate and 3,4-dihydroxy-2-butanone 4-phosphate. The sequence is that of 3,4-dihydroxy-2-butanone 4-phosphate synthase from Desulforamulus reducens (strain ATCC BAA-1160 / DSM 100696 / MI-1) (Desulfotomaculum reducens).